Here is a 292-residue protein sequence, read N- to C-terminus: Phosphoribulokinase, chromosomal (292 aa).

12–20 serves as a coordination point for ATP; sequence GSSGAGTTS.

This sequence belongs to the phosphoribulokinase family. As to quaternary structure, homooctamer.

It catalyses the reaction D-ribulose 5-phosphate + ATP = D-ribulose 1,5-bisphosphate + ADP + H(+). It participates in carbohydrate biosynthesis; Calvin cycle. The protein is Phosphoribulokinase, chromosomal (cfxP) of Cupriavidus necator (strain ATCC 17699 / DSM 428 / KCTC 22496 / NCIMB 10442 / H16 / Stanier 337) (Ralstonia eutropha).